We begin with the raw amino-acid sequence, 100 residues long: MARKSLIQREKKRQRLEQKYHLIRRSSKKEIKKVPSLSEKMEIHGKLQSPPRNSAPTRLHRRCFSTGRPRATYRDFGLSGHILREMLHACLLPGATRSSW.

Over residues 28–45 (KKEIKKVPSLSEKMEIHG) the composition is skewed to basic and acidic residues. Residues 28-59 (KKEIKKVPSLSEKMEIHGKLQSPPRNSAPTRL) are disordered.

This sequence belongs to the universal ribosomal protein uS14 family. In terms of assembly, part of the 30S ribosomal subunit.

The protein resides in the plastid. The protein localises to the chloroplast. In terms of biological role, binds 16S rRNA, required for the assembly of 30S particles. This is Small ribosomal subunit protein uS14c from Nandina domestica (Heavenly bamboo).